We begin with the raw amino-acid sequence, 415 residues long: Glutamyl-tRNA reductase (415 aa).

Substrate is bound by residues 49–52 (TCNR), serine 106, 111–113 (EPQ), and glutamine 117. Cysteine 50 (nucleophile) is an active-site residue. 186-191 (GAGETI) lines the NADP(+) pocket.

Belongs to the glutamyl-tRNA reductase family. In terms of assembly, homodimer.

It catalyses the reaction (S)-4-amino-5-oxopentanoate + tRNA(Glu) + NADP(+) = L-glutamyl-tRNA(Glu) + NADPH + H(+). The protein operates within porphyrin-containing compound metabolism; protoporphyrin-IX biosynthesis; 5-aminolevulinate from L-glutamyl-tRNA(Glu): step 1/2. Functionally, catalyzes the NADPH-dependent reduction of glutamyl-tRNA(Glu) to glutamate 1-semialdehyde (GSA). This chain is Glutamyl-tRNA reductase, found in Teredinibacter turnerae (strain ATCC 39867 / T7901).